Consider the following 660-residue polypeptide: Acetyl-coenzyme A synthetase (660 aa).

Residues 197–200 (RGGK) and threonine 317 each bind CoA. Residues 397–399 (GEP), 421–426 (DTWWQT), aspartate 512, and arginine 528 contribute to the ATP site. Residue serine 536 participates in CoA binding. Position 539 (arginine 539) interacts with ATP. Mg(2+) contacts are provided by valine 550 and valine 555. At lysine 625 the chain carries N6-acetyllysine.

The protein belongs to the ATP-dependent AMP-binding enzyme family. It depends on Mg(2+) as a cofactor. Post-translationally, acetylated. Deacetylation by the SIR2-homolog deacetylase activates the enzyme.

The catalysed reaction is acetate + ATP + CoA = acetyl-CoA + AMP + diphosphate. In terms of biological role, catalyzes the conversion of acetate into acetyl-CoA (AcCoA), an essential intermediate at the junction of anabolic and catabolic pathways. AcsA undergoes a two-step reaction. In the first half reaction, AcsA combines acetate with ATP to form acetyl-adenylate (AcAMP) intermediate. In the second half reaction, it can then transfer the acetyl group from AcAMP to the sulfhydryl group of CoA, forming the product AcCoA. This chain is Acetyl-coenzyme A synthetase, found in Paraburkholderia phymatum (strain DSM 17167 / CIP 108236 / LMG 21445 / STM815) (Burkholderia phymatum).